The following is a 396-amino-acid chain: Protein BOP3 (396 aa).

6 disordered regions span residues Met1–Asn22, Gly98–Pro126, Pro145–His168, Val203–Asn239, Arg254–Leu274, and Arg355–Thr396. Composition is skewed to polar residues over residues Gln111 to Asn124, Ala159 to His168, and Gly210 to Leu230. The span at Arg355–Cys369 shows a compositional bias: basic and acidic residues. Positions Ser370–Thr396 are enriched in polar residues.

It is found in the cytoplasm. The protein localises to the nucleus. Involved in resistance to methylmercury. Overexpression suppresses a PAM1-SLV3 double null mutation. This chain is Protein BOP3 (BOP3), found in Saccharomyces cerevisiae (strain ATCC 204508 / S288c) (Baker's yeast).